We begin with the raw amino-acid sequence, 63 residues long: Large ribosomal subunit protein uL29 (63 aa).

The protein belongs to the universal ribosomal protein uL29 family.

The sequence is that of Large ribosomal subunit protein uL29 from Baumannia cicadellinicola subsp. Homalodisca coagulata.